The primary structure comprises 230 residues: MMAGHDSGNAKRGRSPSFGVFVRKPVERAPAKGASDGAVDSQAIRIDAAQSWPDDAVEVGAVVDAYGLKGWVKLAAHAGAGRGGDALLKARDWWLQKGAERKFARVTQAKLHGDTVVAHPDGSVDRDTALALRGARVFVRRGDFPALAADEFYWVDLIGLDVVNEAGVALGKIADMIDNGVHSIMRVEYPATGKDGRPKTGERLIPFVGVYVKAVEQAAGRVVVDWEADY.

In terms of domain architecture, PRC barrel spans 149 to 230 (ADEFYWVDLI…RVVVDWEADY (82 aa)).

The protein belongs to the RimM family. In terms of assembly, binds ribosomal protein uS19.

It localises to the cytoplasm. An accessory protein needed during the final step in the assembly of 30S ribosomal subunit, possibly for assembly of the head region. Essential for efficient processing of 16S rRNA. May be needed both before and after RbfA during the maturation of 16S rRNA. It has affinity for free ribosomal 30S subunits but not for 70S ribosomes. This chain is Ribosome maturation factor RimM, found in Burkholderia mallei (strain NCTC 10229).